A 338-amino-acid chain; its full sequence is Taste receptor type 2 member 39 (338 aa).

Topologically, residues Met-1–Ser-30 are extracellular. Residues Pro-31–Ala-51 traverse the membrane as a helical segment. The Cytoplasmic portion of the chain corresponds to Asn-52–Arg-74. A helical membrane pass occupies residues Ile-75–Thr-95. Residues Ile-96–Ser-116 are Extracellular-facing. Residues Phe-117–Val-137 form a helical membrane-spanning segment. At Lys-138–Gly-156 the chain is on the cytoplasmic side. Residues Leu-157–Ile-177 form a helical membrane-spanning segment. Topologically, residues Asn-178–Asn-205 are extracellular. Residues Asn-185 and Asn-194 are each glycosylated (N-linked (GlcNAc...) asparagine). Residues Val-206–Leu-226 traverse the membrane as a helical segment. The Cytoplasmic portion of the chain corresponds to Thr-227–Lys-262. Residues Ala-263–Ser-283 traverse the membrane as a helical segment. Topologically, residues Asn-284 to Leu-291 are extracellular. The chain crosses the membrane as a helical span at residues Trp-292–Ile-312. Residues Gln-313–Leu-338 lie on the Cytoplasmic side of the membrane.

It belongs to the G-protein coupled receptor T2R family.

It is found in the membrane. Its function is as follows. Receptor that may play a role in the perception of bitterness and is gustducin-linked. May play a role in sensing the chemical composition of the gastrointestinal content. The activity of this receptor may stimulate alpha gustducin, mediate PLC-beta-2 activation and lead to the gating of TRPM5. This chain is Taste receptor type 2 member 39 (TAS2R39), found in Pan paniscus (Pygmy chimpanzee).